A 430-amino-acid polypeptide reads, in one-letter code: Uric acid permease PucK (430 aa).

Helical transmembrane passes span 18 to 38 (MLAM…AIGL), 43 to 63 (LTYL…LQLW), 67 to 87 (YFGI…GPMI), 97 to 117 (AIYG…GFFG), 122 to 142 (FFPP…LIPT), 163 to 183 (LLGF…KGFI), 185 to 205 (SIAI…MGKV), 209 to 229 (EVLE…PPTF), 233 to 253 (AVVT…GVYF), 274 to 294 (AEGL…TAFS), 310 to 330 (VIAI…AAAL), 333 to 353 (VIPT…VISY), 369 to 389 (LLII…PALF), and 398 to 418 (VLAG…HAFF).

It belongs to the nucleobase:cation symporter-2 (NCS2) (TC 2.A.40) family.

The protein localises to the cell membrane. Uptake of uric acid. The chain is Uric acid permease PucK (pucK) from Bacillus subtilis (strain 168).